The chain runs to 2752 residues: Piezo-type mechanosensitive ion channel component 2 (2752 aa).

Over 1–12 the chain is Cytoplasmic; sequence MASEVVCGLIFR. Residues 13–24 traverse the membrane as a helical segment; sequence LLLPICLAVACA. Over 25 to 30 the chain is Extracellular; that stretch reads FRYNGL. The helical transmembrane segment at 31–43 threads the bilayer; it reads SFVYLIYLLLIPL. At 44–50 the chain is on the cytoplasmic side; the sequence is FSEPTKT. The chain crosses the membrane as a helical span at residues 51 to 76; sequence TMQGHTGRLLKSLCFISLSFLLLHII. The Extracellular portion of the chain corresponds to 77–122; the sequence is FHITLVSLEAQHRIAPGYNCSTWEKTFRQIGFESLKGADAGNGIRV. Asparagine 95 carries an N-linked (GlcNAc...) asparagine glycan. A helical transmembrane segment spans residues 123-141; that stretch reads FVPDIGMFIASLTIWLLCR. Over 142–221 the chain is Cytoplasmic; it reads NIVQKPVTDE…KEFIGNMITT (80 aa). The chain crosses the membrane as a helical span at residues 222–237; that stretch reads AGKVVVTILLGSSGMM. Topologically, residues 238–240 are extracellular; the sequence is LPS. Residues 241-258 traverse the membrane as a helical segment; it reads LTSSVYFFVFLGLCTWWS. Residues 259–264 lie on the Cytoplasmic side of the membrane; that stretch reads WCRTFD. The chain crosses the membrane as a helical span at residues 265–287; that stretch reads PLLFSCLCVLLAIFTAGHLIGLY. Residues 288-335 lie on the Extracellular side of the membrane; that stretch reads LYQFQFFQEAVPPNDYYARLFGIKSVIQTDCSSTWKIIVNPDLSWYHH. The chain crosses the membrane as a helical span at residues 336 to 355; it reads ANPILLLVMYYTLATLIRIW. Residues 356–492 lie on the Cytoplasmic side of the membrane; the sequence is LQEPLVQDEG…SIKVHAMVSV (137 aa). The segment at 446 to 478 is disordered; the sequence is STPQYRWEPSDESSEKREEEEEEKEEFEEERSR. Positions 463–474 are enriched in acidic residues; sequence EEEEEEKEEFEE. The chain crosses the membrane as a helical span at residues 493 to 514; the sequence is FQFIMKQSYICALIAMMAWSIT. Residues 515 to 519 lie on the Extracellular side of the membrane; the sequence is YHSWL. The helical transmembrane segment at 520-531 threads the bilayer; that stretch reads TFVLLIWSCTLW. Topologically, residues 532 to 535 are cytoplasmic; that stretch reads MIRN. A helical membrane pass occupies residues 536–562; the sequence is RRKYAMISSPFMVVYGNLLLILQYIWS. Residues 563–583 are Extracellular-facing; sequence FELPEIKKVPGFLEKKEPGEL. Residues 584 to 614 traverse the membrane as a helical segment; sequence ASKILFTITFWLLLRQHLTEQKALQEKEALL. Residues 615–685 lie on the Cytoplasmic side of the membrane; that stretch reads SEVKIGSQEN…GNLVVAMFIK (71 aa). Over residues 623–632 the composition is skewed to acidic residues; sequence ENEEKDEELQ. The disordered stretch occupies residues 623–664; the sequence is ENEEKDEELQDIQVEGEPKEEEEEEAKEEKQERKKVEQEEAE. A compositionally biased stretch (basic and acidic residues) spans 649 to 660; the sequence is KEEKQERKKVEQ. A helical transmembrane segment spans residues 686-699; the sequence is YWIYVCGGMFFFVS. Over 700-705 the chain is Extracellular; that stretch reads FEGKIV. The chain crosses the membrane as a helical span at residues 706 to 724; the sequence is MYKIIYMVLFLFCVALYQV. Topologically, residues 725–733 are cytoplasmic; the sequence is HYEWWRKIL. The helical transmembrane segment at 734–753 threads the bilayer; it reads KYFWMSVVIYTMLVLIFIYT. The Extracellular segment spans residues 754-785; that stretch reads YQFENFPGLWQNMTGLKKEKLEDLGLKQFTVA. The helical transmembrane segment at 786 to 807 threads the bilayer; the sequence is ELFTRIFIPTSFLLVCILHLHY. At 808 to 940 the chain is on the cytoplasmic side; sequence FHDRFLELTD…QVFMWWILEL (133 aa). Serine 838 carries the phosphoserine modification. The segment covering 862–883 has biased composition (basic and acidic residues); it reads PGEEKLEGYSEKAQKGDLGKDS. The tract at residues 862–902 is disordered; sequence PGEEKLEGYSEKAQKGDLGKDSEESEEDGEEEEESEEEEET. The segment covering 884–902 has biased composition (acidic residues); sequence EESEEDGEEEEESEEEEET. Residues 941 to 956 form a helical membrane-spanning segment; that stretch reads HIIKIVSSYIIWVSVK. Residues 957 to 962 are Extracellular-facing; that stretch reads EVSLFN. A helical transmembrane segment spans residues 963–972; sequence YVFLISWAFA. Residues 973–980 lie on the Cytoplasmic side of the membrane; the sequence is LPYAKLRR. The helical transmembrane segment at 981-1001 threads the bilayer; sequence LASSVCTVWTCVIIVCKMLYQ. Topologically, residues 1002-1057 are extracellular; sequence LQTIKPENFSVNCSLPNENQTNIPFNELNKSLLYSAPIDPTEWVGLRKSSPLLVYL. An N-linked (GlcNAc...) asparagine glycan is attached at asparagine 1013. Cysteine 1014 and cysteine 1192 are disulfide-bonded. A helical transmembrane segment spans residues 1058–1082; it reads RNNLLMLAILAFEVTIYRHQEYYRG. The Cytoplasmic segment spans residues 1083 to 1123; the sequence is RNNLTAPVSRTIFHDITRLHLDDGLINCAKYFINYFFYKFG. The chain crosses the membrane as a helical span at residues 1124-1138; that stretch reads LETCFLMSVNVIGQR. Residues 1139-1140 lie on the Extracellular side of the membrane; that stretch reads MD. A helical transmembrane segment spans residues 1141-1154; that stretch reads FYAMIHACWLIAVL. Residues 1155–1165 are Cytoplasmic-facing; the sequence is YRRRRKAIAEI. Residues 1166 to 1185 form a helical membrane-spanning segment; it reads WPKYCCFLACIITFQYFICI. Over 1186–1222 the chain is Extracellular; it reads GIPPAPCRDYPWRFKGASFNDNIIKWLYFPDFIVRPN. Residues 1223 to 1243 form a helical membrane-spanning segment; sequence PVFLVYDFMLLLCASLQRQIF. Residues 1244-1297 are Cytoplasmic-facing; the sequence is EDENKAAVRIMAGDNVEICMNLDAASFSQHNPVPDFIHCRSYLDMSKVIIFSYL. Residues 1298 to 1310 form a helical membrane-spanning segment; that stretch reads FWFVLTIIFITGT. At 1311–1316 the chain is on the extracellular side; sequence TRISIF. The chain crosses the membrane as a helical span at residues 1317–1329; it reads CMGYLVACFYFLL. Over 1330–1338 the chain is Cytoplasmic; that stretch reads FGGDLLLKP. Residues 1339-1364 form a helical membrane-spanning segment; that stretch reads IKSILRYWDWLIAYNVFVITMKNILS. The Extracellular portion of the chain corresponds to 1365–1413; it reads IGACGYIGTLVHNSCWLIQAFSLACTVKGYQMPAANSPCTLPSGEAGII. The helical transmembrane segment at 1414–1430 threads the bilayer; that stretch reads WDSICFAFLLLQRRVFM. Residues 1431–1921 lie on the Cytoplasmic side of the membrane; the sequence is SYYFLHVVAD…YAMYNTLVAR (491 aa). Residues 1458–1529 adopt a coiled-coil conformation; that stretch reads TIVKAVKARI…EREADKQKAK (72 aa). Disordered stretches follow at residues 1488-1534, 1593-1636, and 1844-1868; these read QQKY…KKKQ, ALRQ…KKSD, and SQDD…KLGS. The span at 1594–1615 shows a compositional bias: basic residues; it reads LRQRHKEKKRSAREERKRRRKG. A helical transmembrane segment spans residues 1922-1936; it reads SEMVCYFVIILNHMV. Residues 1937–1943 are Extracellular-facing; sequence SASMITL. The chain crosses the membrane as a helical span at residues 1944–1955; the sequence is LLPILIFLWAML. Over 1956–1961 the chain is Cytoplasmic; it reads SVPRPS. A helical membrane pass occupies residues 1962–1983; that stretch reads RRFWMMAIVYTEVAIVVKYFFQ. The Extracellular segment spans residues 1984 to 2016; the sequence is FGFFPWNKNVEVNKDKPYHPPNIIGVEKKEGYV. A helical membrane pass occupies residues 2017 to 2035; it reads LYDLIQLLALFFHRSILKC. The Cytoplasmic portion of the chain corresponds to 2036-2189; sequence HGLWDEDDMT…HPEYSAVTDV (154 aa). Disordered stretches follow at residues 2047–2069 and 2090–2135; these read SGMA…DSSD and QQTA…SVLS. The span at 2100–2127 shows a compositional bias: low complexity; it reads GSSSEPSQRSSFSSNRSQRGSTSTRNSS. The helical transmembrane segment at 2190 to 2209 threads the bilayer; that stretch reads YVLMFLADTVDFIIIVFGFW. Residues 2210–2231 are Extracellular-facing; sequence AFGKHSAAADITSSLSEDQVPG. The chain crosses the membrane as a helical span at residues 2232–2252; the sequence is PFLVMVLIQFGTMVVDRALYL. The Cytoplasmic segment spans residues 2253–2256; that stretch reads RKTV. The helical transmembrane segment at 2257 to 2280 threads the bilayer; that stretch reads LGKVIFQVILVFGIHFWMFFILPG. Topologically, residues 2281 to 2289 are extracellular; the sequence is VTERKFSQN. Residues 2290 to 2312 traverse the membrane as a helical segment; sequence LVAQLWYFVKCVYFGLSAYQIRC. At 2313–2397 the chain is on the cytoplasmic side; sequence GYPTRVLGNF…YPQPRGQKKK (85 aa). The helical transmembrane segment at 2398–2421 threads the bilayer; sequence KVVKYGMGGMIIVLLICIVWFPLL. Over 2422–2669 the chain is Extracellular; it reads FMSLIKSVAG…PSLGFLAGYG (248 aa). A helical membrane pass occupies residues 2670–2690; the sequence is IMGLYASVVLVIGKFVREFFS. At 2691-2752 the chain is on the cytoplasmic side; it reads GISHSIMFEE…MIKWTREKTN (62 aa).

This sequence belongs to the PIEZO (TC 1.A.75) family. As to quaternary structure, homotrimer; the homotrimer forms a propeller-shaped Piezo channel with a cation-ion conducting pore. Heterotrimeric interaction may occur between PIEZO1 and PIEZO2. Interacts with STOML3. Interacts with TMC7; the interaction inhibits PIEZO2-conducted mechanically activated currents. Interacts with TMC1; the interaction may be part of the MET complex. Interacts with MDFIC (via C-terminus); the interaction prolongs Piezo channel inactivation. Interacts with MDFI (via C-terminus); the interaction prolongs Piezo channel inactivation.

It is found in the cell membrane. It carries out the reaction Ca(2+)(in) = Ca(2+)(out). Its activity is regulated as follows. Regulated by auxillary subunits MDFIC and MDFI. Channel activity is inhibited by TMEM120A. Phosphatidic acid and lysophosphatidic acid inhibit PIEZO2 channel activity. Its function is as follows. Pore-forming subunit of the mechanosensitive non-specific cation Piezo channel required for rapidly adapting mechanically activated (MA) currents and has a key role in sensing touch and tactile pain. Piezo channels are homotrimeric three-blade propeller-shaped structures that utilize a cap-motion and plug-and-latch mechanism to gate their ion-conducting pathways. Expressed in sensory neurons, is essential for diverse physiological processes, including respiratory control, systemic metabolism, urinary function, and proprioception. Mediates airway stretch sensing, enabling efficient respiration at birth and maintaining normal breathing in adults. It regulates brown and beige adipose tissue morphology and function, preventing systemic hypermetabolism. In the lower urinary tract, acts as a sensor in both the bladder urothelium and innervating sensory neurons being required for bladder-stretch sensing and urethral micturition reflexes, ensuring proper urinary function. Additionally, PIEZO2 serves as the principal mechanotransducer in proprioceptors, facilitating proprioception and coordinated body movements. In inner ear hair cells, PIEZO1/2 subunits may constitute part of the mechanotransducer (MET) non-selective cation channel complex where they may act as pore-forming ion-conducting component in the complex. Required for Merkel-cell mechanotransduction. Plays a major role in light-touch mechanosensation. This is Piezo-type mechanosensitive ion channel component 2 from Homo sapiens (Human).